The sequence spans 87 residues: Small ribosomal subunit protein bS20 (87 aa).

Over residues 1-11 (MANIKSKKKRI) the composition is skewed to basic residues. A disordered region spans residues 1 to 25 (MANIKSKKKRIKTNEKARQRNKAIR).

It belongs to the bacterial ribosomal protein bS20 family.

Binds directly to 16S ribosomal RNA. The polypeptide is Small ribosomal subunit protein bS20 (Corynebacterium kroppenstedtii (strain DSM 44385 / JCM 11950 / CIP 105744 / CCUG 35717)).